The sequence spans 736 residues: Gingipain R2 (736 aa).

The signal sequence occupies residues 1–24; the sequence is MKKNFSRIVSIVAFSSLLGGMAFA. Positions 25–229 are excised as a propeptide; it reads QPAERGRNPQ…SVFMNYEATR (205 aa). The Ca(2+) site is built by Asp307, Val329, Asp332, Tyr334, Glu336, Glu390, and His395. His440 acts as the Proton donor in catalysis. The active-site Nucleophile is the Cys473. Ca(2+) is bound by residues Phe478, Glu487, Asp521, Glu522, Glu525, His531, Asp613, and Glu639.

It belongs to the peptidase C25 family.

Its subcellular location is the secreted. The enzyme catalyses Hydrolysis of proteins and small molecule substrates, with a preference for Arg in P1.. Inhibited by human histatin-3 1/24 (histatin-5). Its function is as follows. Thiol protease. Acts synergistically with RgpA to catalyze the maturation of fimbrial subunits, such as FimA. Its proteolytic activity is a major factor in both periodontal tissue destruction and in evasion of host defense mechanisms. This chain is Gingipain R2 (rgpB), found in Porphyromonas gingivalis (strain ATCC BAA-308 / W83).